The following is a 318-amino-acid chain: tRNA pseudouridine synthase B (318 aa).

The Nucleophile role is filled by Asp47.

The protein belongs to the pseudouridine synthase TruB family. Type 1 subfamily.

The enzyme catalyses uridine(55) in tRNA = pseudouridine(55) in tRNA. Functionally, responsible for synthesis of pseudouridine from uracil-55 in the psi GC loop of transfer RNAs. The chain is tRNA pseudouridine synthase B from Aliivibrio salmonicida (strain LFI1238) (Vibrio salmonicida (strain LFI1238)).